The sequence spans 217 residues: Cytochrome b5 domain-containing protein 1 (217 aa).

In terms of domain architecture, Cytochrome b5 heme-binding spans 6 to 72 (PRYFTPREVS…NPKTGDVKTH (67 aa)). Residues histidine 41 and histidine 72 each coordinate heme.

It belongs to the cytochrome b5 family.

The protein localises to the cytoplasm. It is found in the cytoskeleton. Its subcellular location is the cilium axoneme. Functionally, radial spoke stalk protein that binds heme under oxidizing conditions. Required for the coordinated beating of multiple cilia maybe by functioning in a redox signaling pathway. This is Cytochrome b5 domain-containing protein 1 (cyb5d1) from Xenopus laevis (African clawed frog).